The primary structure comprises 378 residues: D-alanine--D-alanine ligase (378 aa).

The region spanning 140–346 (KKIISQAGIR…YSDLIDRLIQ (207 aa)) is the ATP-grasp domain. Residue 170–225 (EEKLGNLTFVKPAKQGSSVGIHRVTNAEEYEKALDDAFKYDYKILVEQGIANPQEI) coordinates ATP. 3 residues coordinate Mg(2+): Asp300, Glu313, and Asn315.

It belongs to the D-alanine--D-alanine ligase family. Requires Mg(2+) as cofactor. Mn(2+) serves as cofactor.

The protein localises to the cytoplasm. It carries out the reaction 2 D-alanine + ATP = D-alanyl-D-alanine + ADP + phosphate + H(+). It functions in the pathway cell wall biogenesis; peptidoglycan biosynthesis. Cell wall formation. The protein is D-alanine--D-alanine ligase of Limosilactobacillus reuteri (strain DSM 20016) (Lactobacillus reuteri).